We begin with the raw amino-acid sequence, 147 residues long: Prefoldin subunit alpha (147 aa).

It belongs to the prefoldin alpha subunit family. As to quaternary structure, heterohexamer of two alpha and four beta subunits.

Its subcellular location is the cytoplasm. Its function is as follows. Molecular chaperone capable of stabilizing a range of proteins. Seems to fulfill an ATP-independent, HSP70-like function in archaeal de novo protein folding. This chain is Prefoldin subunit alpha, found in Saccharolobus islandicus (strain Y.N.15.51 / Yellowstone #2) (Sulfolobus islandicus).